Consider the following 632-residue polypeptide: DNA gyrase subunit B (632 aa).

The region spanning 419–533 (RELFIVEGES…SGYLYIAQPP (115 aa)) is the Toprim domain. Residues glutamate 425, aspartate 498, and aspartate 500 each coordinate Mg(2+).

The protein belongs to the type II topoisomerase GyrB family. As to quaternary structure, heterotetramer, composed of two GyrA and two GyrB chains. In the heterotetramer, GyrA contains the active site tyrosine that forms a transient covalent intermediate with DNA, while GyrB binds cofactors and catalyzes ATP hydrolysis. It depends on Mg(2+) as a cofactor. The cofactor is Mn(2+). Ca(2+) is required as a cofactor.

The protein resides in the cytoplasm. It catalyses the reaction ATP-dependent breakage, passage and rejoining of double-stranded DNA.. Functionally, a type II topoisomerase that negatively supercoils closed circular double-stranded (ds) DNA in an ATP-dependent manner to modulate DNA topology and maintain chromosomes in an underwound state. Negative supercoiling favors strand separation, and DNA replication, transcription, recombination and repair, all of which involve strand separation. Also able to catalyze the interconversion of other topological isomers of dsDNA rings, including catenanes and knotted rings. Type II topoisomerases break and join 2 DNA strands simultaneously in an ATP-dependent manner. The sequence is that of DNA gyrase subunit B from Archaeoglobus fulgidus (strain ATCC 49558 / DSM 4304 / JCM 9628 / NBRC 100126 / VC-16).